Consider the following 502-residue polypeptide: Glutamate--tRNA ligase (502 aa).

The 'HIGH' region motif lies at 9 to 19; sequence PSPTGFPHVGT. Positions 250-254 match the 'KMSKS' region motif; it reads KLSKR. Lys253 contacts ATP.

Belongs to the class-I aminoacyl-tRNA synthetase family. Glutamate--tRNA ligase type 1 subfamily. In terms of assembly, monomer.

It is found in the cytoplasm. It catalyses the reaction tRNA(Glu) + L-glutamate + ATP = L-glutamyl-tRNA(Glu) + AMP + diphosphate. Catalyzes the attachment of glutamate to tRNA(Glu) in a two-step reaction: glutamate is first activated by ATP to form Glu-AMP and then transferred to the acceptor end of tRNA(Glu). The sequence is that of Glutamate--tRNA ligase from Acinetobacter baumannii (strain AYE).